A 245-amino-acid chain; its full sequence is Thiopurine S-methyltransferase (245 aa).

29–40 (WQEKWVSRRIGF) contacts S-adenosyl-L-methionine. A substrate-binding site is contributed by phenylalanine 40. Lysine 58 is modified (N6-acetyllysine). S-adenosyl-L-methionine contacts are provided by leucine 69, glutamate 90, and arginine 152.

This sequence belongs to the class I-like SAM-binding methyltransferase superfamily. TPMT family. In terms of assembly, monomer.

The protein resides in the cytoplasm. It catalyses the reaction S-adenosyl-L-methionine + a thiopurine = S-adenosyl-L-homocysteine + a thiopurine S-methylether.. This chain is Thiopurine S-methyltransferase (TPMT), found in Canis lupus familiaris (Dog).